We begin with the raw amino-acid sequence, 519 residues long: Exodeoxyribonuclease 7 large subunit (519 aa).

The segment at 500-519 (VGRGKTRKPKEEPPAQGSLL) is disordered.

It belongs to the XseA family. Heterooligomer composed of large and small subunits.

The protein resides in the cytoplasm. The catalysed reaction is Exonucleolytic cleavage in either 5'- to 3'- or 3'- to 5'-direction to yield nucleoside 5'-phosphates.. Its function is as follows. Bidirectionally degrades single-stranded DNA into large acid-insoluble oligonucleotides, which are then degraded further into small acid-soluble oligonucleotides. The sequence is that of Exodeoxyribonuclease 7 large subunit from Cereibacter sphaeroides (strain ATCC 17023 / DSM 158 / JCM 6121 / CCUG 31486 / LMG 2827 / NBRC 12203 / NCIMB 8253 / ATH 2.4.1.) (Rhodobacter sphaeroides).